Reading from the N-terminus, the 109-residue chain is uncharacterized protein (109 aa).

The chain crosses the membrane as a helical span at residues 63 to 85 (LFVKTFFACTYIIMLAFQVYIFL).

The protein localises to the membrane. This is an uncharacterized protein from Saccharomyces cerevisiae (strain ATCC 204508 / S288c) (Baker's yeast).